The following is a 253-amino-acid chain: Trypsin delta (253 aa).

The N-terminal stretch at 1–22 (MLKFVILLSAVACALGGTIPEG) is a signal peptide. The propeptide at 23–30 (LLPQLDGR) is activation peptide. The region spanning 31–253 (IVGGTATTIS…DLRAWVVRNA (223 aa)) is the Peptidase S1 domain. Cysteine 56 and cysteine 72 form a disulfide bridge. Catalysis depends on charge relay system residues histidine 71 and aspartate 116. 2 disulfide bridges follow: cysteine 180–cysteine 197 and cysteine 206–cysteine 230. Serine 210 functions as the Charge relay system in the catalytic mechanism.

This sequence belongs to the peptidase S1 family.

Its subcellular location is the secreted. It is found in the extracellular space. It catalyses the reaction Preferential cleavage: Arg-|-Xaa, Lys-|-Xaa.. The protein is Trypsin delta of Drosophila erecta (Fruit fly).